The sequence spans 118 residues: Basic phospholipase A2 nigroxin A (118 aa).

7 disulfides stabilise this stretch: C11–C70, C25–C117, C27–C43, C42–C98, C49–C91, C59–C84, and C77–C89. 3 residues coordinate Ca(2+): Y26, G28, and G30. H46 is an active-site residue. D47 is a binding site for Ca(2+). Residue D92 is part of the active site.

Belongs to the phospholipase A2 family. Group I subfamily. D49 sub-subfamily. It depends on Ca(2+) as a cofactor. As to expression, expressed by the venom gland.

The protein localises to the secreted. The catalysed reaction is a 1,2-diacyl-sn-glycero-3-phosphocholine + H2O = a 1-acyl-sn-glycero-3-phosphocholine + a fatty acid + H(+). Functionally, snake venom phospholipase A2 (PLA2) that has only a weak enzymatic activity. It has a myotoxic activity in vivo (dystrophic effect). PLA2 catalyzes the calcium-dependent hydrolysis of the 2-acyl groups in 3-sn-phosphoglycerides. In Micrurus nigrocinctus (Central American coral snake), this protein is Basic phospholipase A2 nigroxin A.